The following is a 63-amino-acid chain: 2-hydroxymuconate tautomerase (63 aa).

P2 functions as the Proton acceptor; via imino nitrogen in the catalytic mechanism.

The protein belongs to the 4-oxalocrotonate tautomerase family. Homohexamer.

It carries out the reaction (2Z,4E)-2-hydroxyhexa-2,4-dienedioate = (3E)-2-oxohex-3-enedioate. It participates in xenobiotic degradation; toluene degradation. It functions in the pathway xenobiotic degradation; xylene degradation. In terms of biological role, catalyzes the ketonization of 2-hydroxymuconate stereoselectively to yield 2-oxo-3-hexenedioate. The chain is 2-hydroxymuconate tautomerase (xylH) from Pseudomonas putida (Arthrobacter siderocapsulatus).